Consider the following 111-residue polypeptide: C-type lectin lectoxin-Enh1 (111 aa).

An N-terminal signal peptide occupies residues 1–23 (MGQFTVVSLGLLAMFLSLSGAKG). The cysteines at positions 26 and 37 are disulfide-linked. The region spanning 33–108 (RNGVCNKLFP…CASLHPFICQ (76 aa)) is the C-type lectin domain. Positions 72 to 74 (EPN) match the Mannose-binding motif. The Ca(2+) site is built by Glu-80, Asn-95, and Asp-96. A disulfide bridge links Cys-82 with Cys-99.

It belongs to the true venom lectin family. In terms of tissue distribution, expressed by the venom gland.

It localises to the secreted. Its function is as follows. Mannose-binding lectin which recognizes specific carbohydrate structures and agglutinates a variety of animal cells by binding to cell-surface glycoproteins and glycolipids. May be a calcium-dependent lectin. The polypeptide is C-type lectin lectoxin-Enh1 (Pseudoferania polylepis (Macleay's water snake)).